The primary structure comprises 1001 residues: Kinesin-like protein KIN-14P (1001 aa).

Residues 53-172 (AIRRYEAANW…CVLSLRSFSE (120 aa)) enclose the Calponin-homology (CH) domain. Residues 284-300 (NESVKHALDPNDDKLLS) are compositionally biased toward basic and acidic residues. The interval 284–322 (NESVKHALDPNDDKLLSRADTPPEMESTCTCSTGNMDEE) is disordered. The Kinesin motor domain occupies 426-748 (NIRVYCRVRP…LKFAERVATV (323 aa)). 509-516 (GQTGSGKT) provides a ligand contact to ATP. The stretch at 756–784 (NKEGGEVKELKEQIACLKAALAKKDGETE) forms a coiled coil. Disordered regions lie at residues 804 to 830 (PPAF…QKKR) and 890 to 1001 (EPQW…SAKK). Residues 972-984 (PSASTKNGKQLSL) are compositionally biased toward polar residues.

It belongs to the TRAFAC class myosin-kinesin ATPase superfamily. Kinesin family. KIN-14 subfamily.

This Oryza sativa subsp. japonica (Rice) protein is Kinesin-like protein KIN-14P.